Reading from the N-terminus, the 310-residue chain is UDP-N-acetylenolpyruvoylglucosamine reductase (310 aa).

The FAD-binding PCMH-type domain occupies 34 to 211 (TGGPAQCVYV…REDMGKIAQE (178 aa)). Arginine 177 is an active-site residue. Residue serine 225 is the Proton donor of the active site. Glutamate 295 is an active-site residue.

Belongs to the MurB family. Requires FAD as cofactor.

It is found in the cytoplasm. It carries out the reaction UDP-N-acetyl-alpha-D-muramate + NADP(+) = UDP-N-acetyl-3-O-(1-carboxyvinyl)-alpha-D-glucosamine + NADPH + H(+). The protein operates within cell wall biogenesis; peptidoglycan biosynthesis. In terms of biological role, cell wall formation. The chain is UDP-N-acetylenolpyruvoylglucosamine reductase from Beijerinckia indica subsp. indica (strain ATCC 9039 / DSM 1715 / NCIMB 8712).